We begin with the raw amino-acid sequence, 121 residues long: uncharacterized protein (121 aa).

3 helical membrane-spanning segments follow: residues 12–32 (MIGI…HPGV), 35–55 (VIQP…FGGL), and 67–87 (VFVV…YVGD).

The protein belongs to the sbp family.

It is found in the cell membrane. This is an uncharacterized protein from Mycobacterium bovis (strain ATCC BAA-935 / AF2122/97).